The sequence spans 124 residues: UPF0344 protein BH2983 (124 aa).

Transmembrane regions (helical) follow at residues 15–35, 40–60, 61–81, and 102–122; these read GSWA…KAGK, KILH…GAGM, LVYW…IVLI, and IYWI…YNVI.

This sequence belongs to the UPF0344 family.

The protein localises to the cell membrane. This is UPF0344 protein BH2983 from Halalkalibacterium halodurans (strain ATCC BAA-125 / DSM 18197 / FERM 7344 / JCM 9153 / C-125) (Bacillus halodurans).